A 498-amino-acid polypeptide reads, in one-letter code: Glutamyl-tRNA(Gln) amidotransferase subunit A (498 aa).

Active-site charge relay system residues include K85 and S160. S184 acts as the Acyl-ester intermediate in catalysis.

This sequence belongs to the amidase family. GatA subfamily. As to quaternary structure, heterotrimer of A, B and C subunits.

It catalyses the reaction L-glutamyl-tRNA(Gln) + L-glutamine + ATP + H2O = L-glutaminyl-tRNA(Gln) + L-glutamate + ADP + phosphate + H(+). Functionally, allows the formation of correctly charged Gln-tRNA(Gln) through the transamidation of misacylated Glu-tRNA(Gln) in organisms which lack glutaminyl-tRNA synthetase. The reaction takes place in the presence of glutamine and ATP through an activated gamma-phospho-Glu-tRNA(Gln). The polypeptide is Glutamyl-tRNA(Gln) amidotransferase subunit A (Mycolicibacterium vanbaalenii (strain DSM 7251 / JCM 13017 / BCRC 16820 / KCTC 9966 / NRRL B-24157 / PYR-1) (Mycobacterium vanbaalenii)).